The chain runs to 665 residues: Alpha-1,4-glucan:maltose-1-phosphate maltosyltransferase (665 aa).

Positions 255, 315, and 350 each coordinate alpha-maltose 1-phosphate. The active-site Nucleophile is Asp386. Position 387 (Asn387) interacts with alpha-maltose 1-phosphate. Catalysis depends on Glu415, which acts as the Proton donor. Residue 526–527 coordinates alpha-maltose 1-phosphate; it reads KY.

This sequence belongs to the glycosyl hydrolase 13 family. GlgE subfamily. In terms of assembly, homodimer.

It carries out the reaction alpha-maltose 1-phosphate + [(1-&gt;4)-alpha-D-glucosyl](n) = [(1-&gt;4)-alpha-D-glucosyl](n+2) + phosphate. Maltosyltransferase that uses maltose 1-phosphate (M1P) as the sugar donor to elongate linear or branched alpha-(1-&gt;4)-glucans. Is involved in a branched alpha-glucan biosynthetic pathway from trehalose, together with TreS, Mak and GlgB. The chain is Alpha-1,4-glucan:maltose-1-phosphate maltosyltransferase from Myxococcus xanthus (strain DK1622).